Consider the following 232-residue polypeptide: Ribose-5-phosphate isomerase A (232 aa).

Residues 28 to 31, 83 to 86, and 96 to 99 contribute to the substrate site; these read TGST, DGAD, and KGGG. Glu-105 functions as the Proton acceptor in the catalytic mechanism. Lys-123 serves as a coordination point for substrate.

The protein belongs to the ribose 5-phosphate isomerase family. In terms of assembly, homodimer.

It carries out the reaction aldehydo-D-ribose 5-phosphate = D-ribulose 5-phosphate. It functions in the pathway carbohydrate degradation; pentose phosphate pathway; D-ribose 5-phosphate from D-ribulose 5-phosphate (non-oxidative stage): step 1/1. Functionally, catalyzes the reversible conversion of ribose-5-phosphate to ribulose 5-phosphate. This is Ribose-5-phosphate isomerase A from Rhodopseudomonas palustris (strain ATCC BAA-98 / CGA009).